Reading from the N-terminus, the 461-residue chain is D-phenylhydantoinase (461 aa).

Residues histidine 59, histidine 61, and lysine 151 each coordinate a divalent metal cation. Lysine 151 is subject to N6-carboxylysine. Tyrosine 156 contacts substrate. Histidine 182 and histidine 239 together coordinate a divalent metal cation. Serine 286 is a binding site for substrate. An a divalent metal cation-binding site is contributed by aspartate 313. Asparagine 335 lines the substrate pocket.

The protein belongs to the metallo-dependent hydrolases superfamily. Hydantoinase/dihydropyrimidinase family. In terms of assembly, homotetramer. A divalent metal cation is required as a cofactor. In terms of processing, carboxylation allows a single lysine to coordinate two divalent metal cations.

The catalysed reaction is D-5-phenylhydantoin + H2O = N-carbamoyl-D-phenylglycine + H(+). Functionally, catalyzes the stereospecific hydrolysis of the cyclic amide bond of D-hydantoin derivatives with an aromatic side chains at the 5'-position. Has no activity on dihydropyrimidines. The physiological function is unknown. This Escherichia coli (strain UTI89 / UPEC) protein is D-phenylhydantoinase.